A 229-amino-acid polypeptide reads, in one-letter code: Putative N-acetylmannosamine-6-phosphate 2-epimerase (229 aa).

The protein belongs to the NanE family.

The enzyme catalyses an N-acyl-D-glucosamine 6-phosphate = an N-acyl-D-mannosamine 6-phosphate. Its pathway is amino-sugar metabolism; N-acetylneuraminate degradation; D-fructose 6-phosphate from N-acetylneuraminate: step 3/5. Converts N-acetylmannosamine-6-phosphate (ManNAc-6-P) to N-acetylglucosamine-6-phosphate (GlcNAc-6-P). This is Putative N-acetylmannosamine-6-phosphate 2-epimerase from Escherichia coli O157:H7.